Consider the following 611-residue polypeptide: Actin-related protein 5 (611 aa).

Coiled-coil stretches lie at residues Thr-290–Leu-329 and Ser-355–Val-386.

The protein belongs to the actin family. ARP5 subfamily. Component of the chromatin remodeling INO80 complex.

Its subcellular location is the nucleus. Its function is as follows. Proposed core component of the chromatin remodeling INO80 complex which is involved in transcriptional regulation, DNA replication and probably DNA repair. The protein is Actin-related protein 5 (ACTR5) of Gallus gallus (Chicken).